Consider the following 274-residue polypeptide: 2-dehydro-3-deoxyphosphooctonate aldolase (274 aa).

This sequence belongs to the KdsA family.

Its subcellular location is the cytoplasm. It carries out the reaction D-arabinose 5-phosphate + phosphoenolpyruvate + H2O = 3-deoxy-alpha-D-manno-2-octulosonate-8-phosphate + phosphate. Its pathway is carbohydrate biosynthesis; 3-deoxy-D-manno-octulosonate biosynthesis; 3-deoxy-D-manno-octulosonate from D-ribulose 5-phosphate: step 2/3. It participates in bacterial outer membrane biogenesis; lipopolysaccharide biosynthesis. This Rickettsia conorii (strain ATCC VR-613 / Malish 7) protein is 2-dehydro-3-deoxyphosphooctonate aldolase.